Reading from the N-terminus, the 488-residue chain is Germacrene A hydroxylase (488 aa).

Over 1 to 6 (MELSLT) the chain is Cytoplasmic. A helical; Signal-anchor for type II membrane protein membrane pass occupies residues 7-23 (TSIALATIVLILYKLAT). Topologically, residues 24-488 (RPKSNKKRLP…KTELILVPSF (465 aa)) are lumenal. N-linked (GlcNAc...) asparagine glycans are attached at residues Asn260 and Asn379. Cys432 is a heme binding site.

The protein belongs to the cytochrome P450 family. Heme serves as cofactor.

It localises to the endoplasmic reticulum membrane. The protein resides in the microsome membrane. The catalysed reaction is (+)-(R)-germacrene A + 3 reduced [NADPH--hemoprotein reductase] + 3 O2 = germacra-1(10),4,11(13)-trien-12-oate + 3 oxidized [NADPH--hemoprotein reductase] + 4 H2O + 4 H(+). The protein operates within secondary metabolite biosynthesis; terpenoid biosynthesis. With respect to regulation, inhibited by cytochrome C, miconazole, aminobenzotriazole, metyrapone and clotrimazole. In terms of biological role, involved in the biosynthesis of germacrene-derived sesquiterpene lactones. Catalyzes three consecutive oxidations of germacrene A to produce germacrene A acid. Could also catalyze the three-step oxidation of non-natural substrate amorphadiene to artemisinic acid. Can use beta-elemene as substrate. This chain is Germacrene A hydroxylase, found in Cichorium intybus (Chicory).